We begin with the raw amino-acid sequence, 616 residues long: Dihydroxy-acid dehydratase 1 (616 aa).

Aspartate 81 contributes to the Mg(2+) binding site. Cysteine 122 lines the [2Fe-2S] cluster pocket. Mg(2+) is bound by residues aspartate 123 and lysine 124. N6-carboxylysine is present on lysine 124. Cysteine 195 serves as a coordination point for [2Fe-2S] cluster. A Mg(2+)-binding site is contributed by glutamate 491. Serine 517 (proton acceptor) is an active-site residue.

It belongs to the IlvD/Edd family. In terms of assembly, homodimer. [2Fe-2S] cluster serves as cofactor. It depends on Mg(2+) as a cofactor.

The catalysed reaction is (2R)-2,3-dihydroxy-3-methylbutanoate = 3-methyl-2-oxobutanoate + H2O. It catalyses the reaction (2R,3R)-2,3-dihydroxy-3-methylpentanoate = (S)-3-methyl-2-oxopentanoate + H2O. It functions in the pathway amino-acid biosynthesis; L-isoleucine biosynthesis; L-isoleucine from 2-oxobutanoate: step 3/4. It participates in amino-acid biosynthesis; L-valine biosynthesis; L-valine from pyruvate: step 3/4. Its function is as follows. Functions in the biosynthesis of branched-chain amino acids. Catalyzes the dehydration of (2R,3R)-2,3-dihydroxy-3-methylpentanoate (2,3-dihydroxy-3-methylvalerate) into 2-oxo-3-methylpentanoate (2-oxo-3-methylvalerate) and of (2R)-2,3-dihydroxy-3-methylbutanoate (2,3-dihydroxyisovalerate) into 2-oxo-3-methylbutanoate (2-oxoisovalerate), the penultimate precursor to L-isoleucine and L-valine, respectively. The sequence is that of Dihydroxy-acid dehydratase 1 from Bradyrhizobium diazoefficiens (strain JCM 10833 / BCRC 13528 / IAM 13628 / NBRC 14792 / USDA 110).